A 182-amino-acid polypeptide reads, in one-letter code: UPF0398 protein lwe1908 (182 aa).

Belongs to the UPF0398 family.

The protein is UPF0398 protein lwe1908 of Listeria welshimeri serovar 6b (strain ATCC 35897 / DSM 20650 / CCUG 15529 / CIP 8149 / NCTC 11857 / SLCC 5334 / V8).